The chain runs to 137 residues: Methylglyoxal synthase (137 aa).

The region spanning M1 to A137 is the MGS-like domain. Substrate-binding positions include H8, K12, T34–T37, and S54–G55. The active-site Proton donor/acceptor is D60. Substrate is bound at residue H87.

This sequence belongs to the methylglyoxal synthase family.

The catalysed reaction is dihydroxyacetone phosphate = methylglyoxal + phosphate. Catalyzes the formation of methylglyoxal from dihydroxyacetone phosphate. This chain is Methylglyoxal synthase, found in Bacillus licheniformis (strain ATCC 14580 / DSM 13 / JCM 2505 / CCUG 7422 / NBRC 12200 / NCIMB 9375 / NCTC 10341 / NRRL NRS-1264 / Gibson 46).